The following is a 259-amino-acid chain: Troponin T, fast skeletal muscle (259 aa).

The span at 1-36 shows a compositional bias: acidic residues; that stretch reads MSDEETEQVEEQYEEEEEAQEEEVQEEAPEPEEVQE. The disordered stretch occupies residues 1–62; that stretch reads MSDEETEQVE…EKVDFDDIQK (62 aa). Residue serine 2 is modified to N-acetylserine. Serine 2 carries the phosphoserine modification. Positions 50–62 are enriched in basic and acidic residues; it reads PEGEKVDFDDIQK. Position 78 is a phosphoserine (serine 78). Positions 101 to 143 are enriched in basic and acidic residues; sequence RAERAEQQRIRAEKERERQNRLAEEKARREEEDAKRRAEDDLK. Residues 101 to 180 form a disordered region; sequence RAERAEQQRI…TAREMKKKIL (80 aa). 3 positions are modified to phosphoserine: serine 149, serine 156, and serine 157. Basic and acidic residues predominate over residues 171–180; that stretch reads TAREMKKKIL. Position 193 is a phosphoserine (serine 193). The residue at position 209 (tyrosine 209) is a Phosphotyrosine. The tract at residues 235 to 259 is disordered; that stretch reads RIDQAQKHSKKAGATAKGKVGGRWK.

This sequence belongs to the troponin T family.

Troponin T is the tropomyosin-binding subunit of troponin, the thin filament regulatory complex which confers calcium-sensitivity to striated muscle actomyosin ATPase activity. In Rattus norvegicus (Rat), this protein is Troponin T, fast skeletal muscle (Tnnt3).